Here is a 345-residue protein sequence, read N- to C-terminus: Skn-1 dependent zygotic transcript 15 protein (345 aa).

Residues 11-55 enclose the F-box domain; the sequence is AFGLHKLPHLVSDKVVKSMVPMELFTYSMVAEETKALVKRLFKKV.

Functionally, may have a role in embryogenesis. This Caenorhabditis elegans protein is Skn-1 dependent zygotic transcript 15 protein (sdz-15).